The chain runs to 213 residues: Ras-related protein RabK1 (213 aa).

GTP is bound at residue 14 to 21 (GDRMVGKL). The Effector region signature appears at 36–43 (GNSIPFDF). GTP-binding positions include 61-65 (NTHGS) and 119-122 (TKSD).

Belongs to the small GTPase superfamily. Rab family.

In Dictyostelium discoideum (Social amoeba), this protein is Ras-related protein RabK1 (rabK1).